Consider the following 465-residue polypeptide: A-type ATP synthase subunit B (465 aa).

This sequence belongs to the ATPase alpha/beta chains family. Has multiple subunits with at least A(3), B(3), C, D, E, F, H, I and proteolipid K(x).

It localises to the cell membrane. Component of the A-type ATP synthase that produces ATP from ADP in the presence of a proton gradient across the membrane. The B chain is a regulatory subunit. In Sulfurisphaera tokodaii (strain DSM 16993 / JCM 10545 / NBRC 100140 / 7) (Sulfolobus tokodaii), this protein is A-type ATP synthase subunit B.